The chain runs to 86 residues: Allergen Hum j 3 (86 aa).

This is Allergen Hum j 3 from Humulus japonicus (Japanese hop).